The following is a 402-amino-acid chain: O-glucosyltransferase rumi homolog (402 aa).

Positions 1-20 are cleaved as a signal peptide; sequence MPYLEIVLALLVLSFQLGHS. Cystine bridges form between Cys67–Cys74, Cys72–Cys375, Cys118–Cys124, and Cys279–Cys302. Asn71 carries N-linked (GlcNAc...) asparagine glycosylation. Asp149 serves as the catalytic Proton donor/acceptor. The interval 189–194 is interaction with the consensus sequence C-X-S-X-[PA]-C in peptide substrates; it reads AISLYP. UDP-alpha-D-glucose-binding positions include 226 to 230, Arg234, 273 to 275, and 291 to 295; these read RGSRT, VRL, and AASFR.

This sequence belongs to the glycosyltransferase 90 family.

It is found in the endoplasmic reticulum lumen. The protein localises to the secreted. It functions in the pathway protein modification; protein glycosylation. In terms of biological role, protein O-glucosyltransferase. Catalyzes the reaction that attaches glucose through an O-glycosidic linkage to a conserved serine residue found in the consensus sequence C-X-S-X-[PA]-C in epidermal growth factor-like repeats. Regulates Notch signaling by glucosylating Notch in the ER, glucosylation is required for the correct folding and cleavage of Notch. The sequence is that of O-glucosyltransferase rumi homolog from Aedes aegypti (Yellowfever mosquito).